The primary structure comprises 442 residues: Cytokine receptor-like factor 3 (442 aa).

A coiled-coil region spans residues glutamate 10–glutamate 46. Residues proline 181–proline 274 enclose the Fibronectin type-III domain.

This sequence belongs to the cytokine receptor-like factor 3 family.

The protein localises to the cytoplasm. Functionally, may play a role in the negative regulation of cell cycle progression. The protein is Cytokine receptor-like factor 3 (Crlf3) of Mus musculus (Mouse).